Consider the following 330-residue polypeptide: Taste receptor type 2 member 136 (330 aa).

The Extracellular portion of the chain corresponds to 1–32; it reads MKSQPVTQELHFIFPLFKTISSDIMSFLVSIA. The chain crosses the membrane as a helical span at residues 33–53; the sequence is GIAMLAQIVLGTFANVFIVLV. The Cytoplasmic segment spans residues 54-73; sequence TCTDCIRRRKLFLADGILTS. A helical transmembrane segment spans residues 74 to 94; that stretch reads LAFCRIGMLWVILISWCSIVF. Over 95–122 the chain is Extracellular; the sequence is HQALSLQVRFSICVGWAVTNHFNMWLAT. The chain crosses the membrane as a helical span at residues 123 to 143; it reads ILSILYLLKIGNFSNLIFLGL. Topologically, residues 144–149 are cytoplasmic; the sequence is KRKIKS. A helical membrane pass occupies residues 150 to 170; the sequence is VFIVVLLASLVLLFPNLITVT. Topologically, residues 171–201 are extracellular; that stretch reads VCETVQANGYRGNLTGKTKRTYFMNLTAMIS. N-linked (GlcNAc...) asparagine glycans are attached at residues N183 and N195. Residues 202 to 222 traverse the membrane as a helical segment; the sequence is FTLDNIISFTISMVCFLLLIY. The Cytoplasmic segment spans residues 223–248; sequence SLCKHLRTMRLYGKGPHNPSASAHIK. A helical membrane pass occupies residues 249 to 269; that stretch reads ALQAVISFLLLFSMFILSLII. The Extracellular segment spans residues 270 to 283; sequence SGYNYMKPLNEPVH. A helical membrane pass occupies residues 284 to 304; it reads LICQLIGTLYPSSHSYVLLWG. Residues 305-330 lie on the Cytoplasmic side of the membrane; the sequence is NRRIKLAFVLAMVQVRARLWLKEEKP.

It belongs to the G-protein coupled receptor T2R family.

The protein resides in the membrane. Its function is as follows. Putative taste receptor which may play a role in the perception of bitterness. The polypeptide is Taste receptor type 2 member 136 (Rattus norvegicus (Rat)).